A 527-amino-acid chain; its full sequence is MAGPAWRDAADVVVIGTGVAGLAAALAADRAGRSVVVLSKAAQTHVTATHYAQGGIAVVLPDNDDSVDAHVADTLAAGAGLCDPDAVYSIVADGYRAVTDLVGAGARLDESVPGRWALTREGGHSRRRIVHAGGDATGAEVQRALQDAAGMLDIRTGHVALRVLHDGTAVTGLLVVRPDGCGIISAPSVILATGGLGHLYSATTNPAGSTGDGIALGLWAGVAVSDLEFIQFHPTMLFAGRAGGRRPLITEAIRGEGAILVDRQGNSITAGVHPMGDLAPRDVVAAAIDARLKATGDPCVYLDARGIEGFASRFPTVTASCRAAGIDPVRQPIPVVPGAHYSCGGIVTDVYGQTELLGLYAAGEVARTGLHGANRLASNSLLEGLVVGGRAGKAAAAHAAAAGRSRATSSATWPEPISYTALDRGDLQRAMSRDASMYRAAAGLHRLCDSLSGAQVRDVACRRDFEDVALTLVAQSVTAAALARTESRGCHHRAEYPCTVPEQARSIVVRGADDANAVCVQALVAVC.

Residues 17 to 20 (TGVA), Lys40, 48 to 55 (ATHYAQGG), and Asp212 contribute to the FAD site. The active-site Proton donor/acceptor is the Arg281. FAD is bound by residues Glu364 and 380-381 (SL).

This sequence belongs to the FAD-dependent oxidoreductase 2 family. NadB subfamily. It depends on FAD as a cofactor.

The protein resides in the cytoplasm. The enzyme catalyses L-aspartate + O2 = iminosuccinate + H2O2. The protein operates within cofactor biosynthesis; NAD(+) biosynthesis; iminoaspartate from L-aspartate (oxidase route): step 1/1. Catalyzes the oxidation of L-aspartate to iminoaspartate, the first step in the de novo biosynthesis of NAD(+). The chain is L-aspartate oxidase (nadB) from Mycobacterium tuberculosis (strain CDC 1551 / Oshkosh).